The following is a 50-amino-acid chain: uncharacterized protein (50 aa).

This is an uncharacterized protein from Dichelobacter nodosus (Bacteroides nodosus).